We begin with the raw amino-acid sequence, 1972 residues long: Myosin-11 (1972 aa).

Residues Ser8, Ser23, and Ser40 each carry the phosphoserine modification. A Myosin N-terminal SH3-like domain is found at 31 to 81 (AAKRLVWVPSEKQGFEAASIKEEKGDEVVVELVENGKKVTVGKDDIQKMNP). The Myosin motor domain maps to 85-783 (SKVEDMAELT…VLAHLEEERD (699 aa)). Lys129 is modified (N6,N6,N6-trimethyllysine). 178–185 (GESGAGKT) provides a ligand contact to ATP. Actin-binding regions lie at residues 661–683 (LGKLMTTLRNTTPNFVRCIIPNH) and 762–776 (RIGQSKIFFRTGVLA). The 30-residue stretch at 786-815 (ITDVIMAFQAMCRGYLARKAFAKRQQQLTA) folds into the IQ domain. Positions 844-1934 (LLQVTRQEEE…KSKLRRGNET (1091 aa)) form a coiled coil. Residues 858–882 (EDELQKTKERQQKAENELKELEQKH) form a disordered region. Residue Thr1177 is modified to Phosphothreonine. Residues Ser1684 and Ser1722 each carry the phosphoserine modification. Disordered regions lie at residues 1744 to 1800 (ELEE…LRSK) and 1866 to 1972 (EQYK…KASE). Over residues 1762 to 1788 (ATQQAEQLSNELATERSTAQKNESARQ) the composition is skewed to polar residues. 2 stretches are compositionally biased toward basic and acidic residues: residues 1789-1800 (QLERQNKELRSK) and 1866-1876 (EQYKEQAEKGN). The tract at residues 1935–1972 (SFVPSRRSGGRRVIENADGSEEETDTRDADFNGTKASE) is C-terminal. Ser1954 is modified (phosphoserine). Phosphothreonine is present on Thr1958. Position 1971 is a phosphoserine (Ser1971).

The protein belongs to the TRAFAC class myosin-kinesin ATPase superfamily. Myosin family. Muscle myosin is a hexameric protein that consists of 2 heavy chain subunits (MHC), 2 alkali light chain subunits (MLC) and 2 regulatory light chain subunits (MLC-2). Smooth muscle; expressed in the umbilical artery, bladder, esophagus and trachea. Isoform 1 is mostly found in slowly contracting tonic muscles.

It is found in the melanosome. In terms of biological role, muscle contraction. The protein is Myosin-11 (MYH11) of Homo sapiens (Human).